Consider the following 457-residue polypeptide: Siroheme synthase (457 aa).

The precorrin-2 dehydrogenase /sirohydrochlorin ferrochelatase stretch occupies residues 1-204 (MDHLPIFCQL…NDQKAITETT (204 aa)). NAD(+)-binding positions include 22-23 (DV) and 43-44 (LA). S128 is subject to Phosphoserine. Residues 216–457 (GEVVLVGAGP…RDKLNWFSNH (242 aa)) are uroporphyrinogen-III C-methyltransferase. P225 provides a ligand contact to S-adenosyl-L-methionine. The active-site Proton acceptor is the D248. K270 (proton donor) is an active-site residue. S-adenosyl-L-methionine contacts are provided by residues 301–303 (GGD), I306, 331–332 (TA), M382, and G411.

In the N-terminal section; belongs to the precorrin-2 dehydrogenase / sirohydrochlorin ferrochelatase family. The protein in the C-terminal section; belongs to the precorrin methyltransferase family.

It catalyses the reaction uroporphyrinogen III + 2 S-adenosyl-L-methionine = precorrin-2 + 2 S-adenosyl-L-homocysteine + H(+). It carries out the reaction precorrin-2 + NAD(+) = sirohydrochlorin + NADH + 2 H(+). The catalysed reaction is siroheme + 2 H(+) = sirohydrochlorin + Fe(2+). Its pathway is cofactor biosynthesis; adenosylcobalamin biosynthesis; precorrin-2 from uroporphyrinogen III: step 1/1. It functions in the pathway cofactor biosynthesis; adenosylcobalamin biosynthesis; sirohydrochlorin from precorrin-2: step 1/1. It participates in porphyrin-containing compound metabolism; siroheme biosynthesis; precorrin-2 from uroporphyrinogen III: step 1/1. The protein operates within porphyrin-containing compound metabolism; siroheme biosynthesis; siroheme from sirohydrochlorin: step 1/1. Its pathway is porphyrin-containing compound metabolism; siroheme biosynthesis; sirohydrochlorin from precorrin-2: step 1/1. Functionally, multifunctional enzyme that catalyzes the SAM-dependent methylations of uroporphyrinogen III at position C-2 and C-7 to form precorrin-2 via precorrin-1. Then it catalyzes the NAD-dependent ring dehydrogenation of precorrin-2 to yield sirohydrochlorin. Finally, it catalyzes the ferrochelation of sirohydrochlorin to yield siroheme. The chain is Siroheme synthase from Escherichia coli O81 (strain ED1a).